We begin with the raw amino-acid sequence, 156 residues long: ATP synthase subunit b (156 aa).

A helical membrane pass occupies residues 3-23 (INFTLLAQALAFAGLIWIIAT).

Belongs to the ATPase B chain family. As to quaternary structure, F-type ATPases have 2 components, F(1) - the catalytic core - and F(0) - the membrane proton channel. F(1) has five subunits: alpha(3), beta(3), gamma(1), delta(1), epsilon(1). F(0) has three main subunits: a(1), b(2) and c(10-14). The alpha and beta chains form an alternating ring which encloses part of the gamma chain. F(1) is attached to F(0) by a central stalk formed by the gamma and epsilon chains, while a peripheral stalk is formed by the delta and b chains.

The protein resides in the cell membrane. F(1)F(0) ATP synthase produces ATP from ADP in the presence of a proton or sodium gradient. F-type ATPases consist of two structural domains, F(1) containing the extramembraneous catalytic core and F(0) containing the membrane proton channel, linked together by a central stalk and a peripheral stalk. During catalysis, ATP synthesis in the catalytic domain of F(1) is coupled via a rotary mechanism of the central stalk subunits to proton translocation. In terms of biological role, component of the F(0) channel, it forms part of the peripheral stalk, linking F(1) to F(0). The chain is ATP synthase subunit b from Stenotrophomonas maltophilia (strain K279a).